We begin with the raw amino-acid sequence, 338 residues long: Large ribosomal subunit protein uL10 (338 aa).

The segment at 303-338 is disordered; sequence VEVSAAPAAEEEKEEEKKEEEKKEEDTGAAGLALLF. Residues 317 to 328 show a composition bias toward basic and acidic residues; sequence EEKKEEEKKEED.

Belongs to the universal ribosomal protein uL10 family. As to quaternary structure, part of the 50S ribosomal subunit. Forms part of the ribosomal stalk which helps the ribosome interact with GTP-bound translation factors. Forms a heptameric L10(L12)2(L12)2(L12)2 complex, where L10 forms an elongated spine to which the L12 dimers bind in a sequential fashion.

Forms part of the ribosomal stalk, playing a central role in the interaction of the ribosome with GTP-bound translation factors. The polypeptide is Large ribosomal subunit protein uL10 (Methanocaldococcus jannaschii (strain ATCC 43067 / DSM 2661 / JAL-1 / JCM 10045 / NBRC 100440) (Methanococcus jannaschii)).